A 307-amino-acid chain; its full sequence is Myeloid-associated differentiation marker-like protein 2 (307 aa).

MARVEL domains follow at residues 17 to 154 and 159 to 303; these read AVTS…ARPG and YMAT…RIRF. 7 consecutive transmembrane segments (helical) span residues 53–73, 90–110, 129–149, 163–183, 198–218, 232–252, and 278–298; these read FCVA…ACEF, AFAM…PLYF, LAAS…VALT, VSGL…GALV, VAVY…SVLG, VVYT…WPVF, and LVVA…LAYS.

This sequence belongs to the MAL family.

Its subcellular location is the membrane. The polypeptide is Myeloid-associated differentiation marker-like protein 2 (MYADML2) (Bos taurus (Bovine)).